A 1057-amino-acid polypeptide reads, in one-letter code: Probable E3 ubiquitin-protein ligase HERC4 (1057 aa).

7 RCC1 repeats span residues 1–51, 52–101, 102–154, 156–207, 208–259, 261–311, and 313–366; these read MLCW…FVLD, DGTV…ALND, KGQV…ALSK, SEVF…VLTL, SGAI…ALTK, GGVF…AFVP, and SGRI…CVKR. The HECT domain maps to 730 to 1057; sequence KNIDYKKPLK…IDHNEGFSLI (328 aa). The Glycyl thioester intermediate role is filled by Cys1025.

As to expression, ubiquitously expressed, highest expression is found in testis during spermiogenesis. It is specifically found in spermatogonia, spermatocytes, and spermatids with little or no expression detectable in the spermatozoa, or interstitial cells.

It is found in the cytoplasm. The protein localises to the cytosol. It carries out the reaction S-ubiquitinyl-[E2 ubiquitin-conjugating enzyme]-L-cysteine + [acceptor protein]-L-lysine = [E2 ubiquitin-conjugating enzyme]-L-cysteine + N(6)-ubiquitinyl-[acceptor protein]-L-lysine.. Its pathway is protein modification; protein ubiquitination. Probable E3 ubiquitin-protein ligase involved in either protein trafficking or in the distribution of cellular structures. Required for spermatozoon maturation and fertility, and for the removal of the cytoplasmic droplet of the spermatozoon. E3 ubiquitin-protein ligases accept ubiquitin from an E2 ubiquitin-conjugating enzyme in the form of a thioester and then directly transfer it to targeted substrates. The chain is Probable E3 ubiquitin-protein ligase HERC4 (Herc4) from Mus musculus (Mouse).